The sequence spans 255 residues: Octanoyltransferase (255 aa).

The BPL/LPL catalytic domain occupies 54 to 238 (GDANELVWLL…SFTTIFGATV (185 aa)). Substrate is bound by residues 92–99 (RGGQLTYH), 167–169 (AIG), and 180–182 (GIA). Cys-198 acts as the Acyl-thioester intermediate in catalysis.

Belongs to the LipB family.

It localises to the cytoplasm. It catalyses the reaction octanoyl-[ACP] + L-lysyl-[protein] = N(6)-octanoyl-L-lysyl-[protein] + holo-[ACP] + H(+). It functions in the pathway protein modification; protein lipoylation via endogenous pathway; protein N(6)-(lipoyl)lysine from octanoyl-[acyl-carrier-protein]: step 1/2. Catalyzes the transfer of endogenously produced octanoic acid from octanoyl-acyl-carrier-protein onto the lipoyl domains of lipoate-dependent enzymes. Lipoyl-ACP can also act as a substrate although octanoyl-ACP is likely to be the physiological substrate. In Rhodopseudomonas palustris (strain BisB5), this protein is Octanoyltransferase.